Here is a 587-residue protein sequence, read N- to C-terminus: L-ornithine N(5)-monooxygenase (587 aa).

FAD contacts are provided by residues 53–61 (EKHTSFQWH) and Gln-72. Residue Lys-77 participates in substrate binding. Residue 235–238 (GGQS) coordinates NADP(+). Substrate contacts are provided by residues 282–285 (NEVF) and Asn-312. Position 312-314 (312-314 (NYS)) interacts with NADP(+). Residues 488-511 (DNSAASGVSGASTPLTSPSEEEGK) are disordered. Polar residues predominate over residues 491–505 (AASGVSGASTPLTSP). FAD is bound at residue 567-569 (TLL). Ser-570 is a substrate binding site.

Belongs to the lysine N(6)-hydroxylase/L-ornithine N(5)-oxygenase family. In terms of assembly, homotetramer. It depends on FAD as a cofactor.

The enzyme catalyses L-ornithine + NADPH + O2 = N(5)-hydroxy-L-ornithine + NADP(+) + H2O. It carries out the reaction L-ornithine + NADH + O2 = N(5)-hydroxy-L-ornithine + NAD(+) + H2O. Its pathway is siderophore biosynthesis; ferrichrome biosynthesis. Functionally, L-ornithine N(5)-monooxygenase; part of the siderophore biosynthetic pathway. Omphalotus olearius produces ferrichrome A, but no other siderophore has been detected. Ferrichrome A consists of a hexapeptide ring made up of one glycine, two serine, and three N(5)-hydroxyornithine amino acid residues, the latter acylated by trans-(alpha-methyl)-glutaconic acid residues. The biosynthesis of ferrichrome A depends on the hydroxylation of ornithine to N(5)-hydroxyornithine, catalyzed by the monooxygenase omo1. The second step, the acylation of N(5)-hydroxy-L-ornithine is probably catalyzed by the N-acyltransferase ato1. Finally, assembly of ferrichrome A is catalyzed by the nonribosomal peptide synthase (NRPS) fso1. In Omphalotus olearius (Jack o'lantern), this protein is L-ornithine N(5)-monooxygenase.